A 287-amino-acid chain; its full sequence is Acetylglutamate kinase (287 aa).

Residues 70-71 (GG), arginine 92, and asparagine 184 contribute to the substrate site.

This sequence belongs to the acetylglutamate kinase family. ArgB subfamily.

The protein resides in the cytoplasm. It carries out the reaction N-acetyl-L-glutamate + ATP = N-acetyl-L-glutamyl 5-phosphate + ADP. Its pathway is amino-acid biosynthesis; L-arginine biosynthesis; N(2)-acetyl-L-ornithine from L-glutamate: step 2/4. Its function is as follows. Catalyzes the ATP-dependent phosphorylation of N-acetyl-L-glutamate. The chain is Acetylglutamate kinase from Roseobacter denitrificans (strain ATCC 33942 / OCh 114) (Erythrobacter sp. (strain OCh 114)).